The chain runs to 308 residues: Pseudouridine-5'-phosphate glycosidase (308 aa).

The active-site Proton donor is the Glu-25. Residues Lys-86 and Val-106 each contribute to the substrate site. A Mn(2+)-binding site is contributed by Asp-142. Position 144 to 146 (144 to 146 (SAD)) interacts with substrate. Lys-163 functions as the Nucleophile in the catalytic mechanism.

It belongs to the pseudouridine-5'-phosphate glycosidase family. As to quaternary structure, homotrimer. It depends on Mn(2+) as a cofactor.

The catalysed reaction is D-ribose 5-phosphate + uracil = psi-UMP + H2O. Functionally, catalyzes the reversible cleavage of pseudouridine 5'-phosphate (PsiMP) to ribose 5-phosphate and uracil. Functions biologically in the cleavage direction, as part of a pseudouridine degradation pathway. This chain is Pseudouridine-5'-phosphate glycosidase, found in Symbiobacterium thermophilum (strain DSM 24528 / JCM 14929 / IAM 14863 / T).